Reading from the N-terminus, the 578-residue chain is Probable multidrug ABC transporter ATP-binding protein YbhF (578 aa).

ABC transporter domains lie at 6 to 237 and 330 to 559; these read ITLN…LMTS and IEAK…PDPT. ATP is bound by residues 40 to 47 and 362 to 369; these read GPDGAGKT and GPNGAGKS.

The protein belongs to the ABC transporter superfamily. As to quaternary structure, the complex is probably composed of two ATP-binding proteins (YbhF) and two transmembrane proteins (YbhR and YbhS).

Functionally, part of the ABC transporter complex YbhFSR that could be involved in efflux of cefoperazone. Probably responsible for energy coupling to the transport system. The polypeptide is Probable multidrug ABC transporter ATP-binding protein YbhF (ybhF) (Escherichia coli (strain K12)).